We begin with the raw amino-acid sequence, 320 residues long: tRNA N6-adenosine threonylcarbamoyltransferase (320 aa).

Histidine 114 and histidine 118 together coordinate Fe cation. Residues 136–140, aspartate 169, glycine 182, aspartate 186, and asparagine 273 each bind substrate; that span reads VVSGG. Aspartate 297 serves as a coordination point for Fe cation.

The protein belongs to the KAE1 / TsaD family. Fe(2+) serves as cofactor.

The protein localises to the cytoplasm. It carries out the reaction L-threonylcarbamoyladenylate + adenosine(37) in tRNA = N(6)-L-threonylcarbamoyladenosine(37) in tRNA + AMP + H(+). Its function is as follows. Required for the formation of a threonylcarbamoyl group on adenosine at position 37 (t(6)A37) in tRNAs that read codons beginning with adenine. Is involved in the transfer of the threonylcarbamoyl moiety of threonylcarbamoyl-AMP (TC-AMP) to the N6 group of A37, together with TsaE and TsaB. TsaD likely plays a direct catalytic role in this reaction. The chain is tRNA N6-adenosine threonylcarbamoyltransferase from Ureaplasma urealyticum serovar 10 (strain ATCC 33699 / Western).